We begin with the raw amino-acid sequence, 267 residues long: 3-methyl-2-oxobutanoate hydroxymethyltransferase (267 aa).

Aspartate 45 and aspartate 84 together coordinate Mg(2+). Residues 45–46 (DS), aspartate 84, and lysine 113 each bind 3-methyl-2-oxobutanoate. Residue glutamate 115 participates in Mg(2+) binding. Catalysis depends on glutamate 182, which acts as the Proton acceptor.

The protein belongs to the PanB family. Homodecamer; pentamer of dimers. Mg(2+) serves as cofactor.

It is found in the cytoplasm. It catalyses the reaction 3-methyl-2-oxobutanoate + (6R)-5,10-methylene-5,6,7,8-tetrahydrofolate + H2O = 2-dehydropantoate + (6S)-5,6,7,8-tetrahydrofolate. The protein operates within cofactor biosynthesis; coenzyme A biosynthesis. Its function is as follows. Catalyzes the reversible reaction in which hydroxymethyl group from 5,10-methylenetetrahydrofolate is transferred onto alpha-ketoisovalerate to form ketopantoate. The protein is 3-methyl-2-oxobutanoate hydroxymethyltransferase of Saccharolobus solfataricus (strain ATCC 35092 / DSM 1617 / JCM 11322 / P2) (Sulfolobus solfataricus).